A 301-amino-acid chain; its full sequence is 4-hydroxy-tetrahydrodipicolinate synthase (301 aa).

Threonine 53 contributes to the pyruvate binding site. Tyrosine 142 functions as the Proton donor/acceptor in the catalytic mechanism. Residue lysine 170 is the Schiff-base intermediate with substrate of the active site. A pyruvate-binding site is contributed by valine 212.

This sequence belongs to the DapA family. As to quaternary structure, homotetramer; dimer of dimers.

It localises to the cytoplasm. It carries out the reaction L-aspartate 4-semialdehyde + pyruvate = (2S,4S)-4-hydroxy-2,3,4,5-tetrahydrodipicolinate + H2O + H(+). It participates in amino-acid biosynthesis; L-lysine biosynthesis via DAP pathway; (S)-tetrahydrodipicolinate from L-aspartate: step 3/4. Catalyzes the condensation of (S)-aspartate-beta-semialdehyde [(S)-ASA] and pyruvate to 4-hydroxy-tetrahydrodipicolinate (HTPA). The polypeptide is 4-hydroxy-tetrahydrodipicolinate synthase (Synechocystis sp. (strain ATCC 27184 / PCC 6803 / Kazusa)).